Reading from the N-terminus, the 365-residue chain is Histidine biosynthesis bifunctional protein HisB (365 aa).

The segment at 1–176 (MTQQPTLFID…VADPKGLGQP (176 aa)) is histidinol-phosphatase. The Nucleophile role is filled by D10. Mg(2+) contacts are provided by D10 and D12. D12 serves as the catalytic Proton donor. The Zn(2+) site is built by C93, H95, C101, and C103. D130 lines the Mg(2+) pocket. The imidazoleglycerol-phosphate dehydratase stretch occupies residues 177 to 365 (RHAVVARKTK…NEMPSSKGVL (189 aa)).

The protein in the N-terminal section; belongs to the histidinol-phosphatase family. This sequence in the C-terminal section; belongs to the imidazoleglycerol-phosphate dehydratase family. The cofactor is Mg(2+). Zn(2+) is required as a cofactor.

The protein resides in the cytoplasm. The enzyme catalyses D-erythro-1-(imidazol-4-yl)glycerol 3-phosphate = 3-(imidazol-4-yl)-2-oxopropyl phosphate + H2O. The catalysed reaction is L-histidinol phosphate + H2O = L-histidinol + phosphate. The protein operates within amino-acid biosynthesis; L-histidine biosynthesis; L-histidine from 5-phospho-alpha-D-ribose 1-diphosphate: step 6/9. Its pathway is amino-acid biosynthesis; L-histidine biosynthesis; L-histidine from 5-phospho-alpha-D-ribose 1-diphosphate: step 8/9. This Mannheimia succiniciproducens (strain KCTC 0769BP / MBEL55E) protein is Histidine biosynthesis bifunctional protein HisB.